The chain runs to 332 residues: UPF0194 membrane protein YbhG (332 aa).

The first 16 residues, 1-16, serve as a signal peptide directing secretion; the sequence is MMKKPVVIGLAVVVLA. Residues 107 to 209 are a coiled coil; the sequence is NEEIAQAAAA…LNLQDSTLIA (103 aa).

The protein belongs to the UPF0194 family.

The protein resides in the periplasm. The protein is UPF0194 membrane protein YbhG of Escherichia coli (strain K12 / MC4100 / BW2952).